Reading from the N-terminus, the 458-residue chain is Zinc finger protein 19 (458 aa).

In terms of domain architecture, KRAB spans 14–85 (VTFEDVAVHF…EAQDDPPAER (72 aa)). C2H2-type zinc fingers lie at residues 161–183 (FICE…QRIH), 189–211 (FECS…QRIH), 217–239 (YQCE…QRIH), 245–267 (YYCT…QRIH), 273–295 (YECN…QKIH), 301–323 (YECN…QRIH), 329–351 (YSCK…QRIH), 357–379 (FDCV…LRIH), and 385–407 (YVCD…QRIH). The C2H2-type 10; atypical zinc finger occupies 413–433 (YECSKYEKAFGTSSQLGHLEH).

It belongs to the krueppel C2H2-type zinc-finger protein family.

It localises to the nucleus. Its function is as follows. May be involved in transcriptional regulation. In Homo sapiens (Human), this protein is Zinc finger protein 19 (ZNF19).